Consider the following 1059-residue polypeptide: Probable sucrose-phosphate synthase (1059 aa).

Disordered stretches follow at residues 95–145, 671–695, 710–731, and 748–769; these read AVQR…VKSR, RHPQ…GDSL, DGER…NATD, and SKDT…ASKF. Over residues 102–114 the composition is skewed to basic and acidic residues; sequence RRLERERGRREAT. The span at 681-691 shows a compositional bias: acidic residues; it reads GGESSESEESP.

It belongs to the glycosyltransferase 1 family. Homodimer or homotetramer.

It carries out the reaction beta-D-fructose 6-phosphate + UDP-alpha-D-glucose = sucrose 6(F)-phosphate + UDP + H(+). It functions in the pathway glycan biosynthesis; sucrose biosynthesis; sucrose from D-fructose 6-phosphate and UDP-alpha-D-glucose: step 1/2. Its activity is regulated as follows. Activity is regulated by phosphorylation and moderated by concentration of metabolites and light. Functionally, plays a role in photosynthetic sucrose synthesis by catalyzing the rate-limiting step of sucrose biosynthesis from UDP-glucose and fructose- 6-phosphate. Involved in the regulation of carbon partitioning in the leaves of plants. May regulate the synthesis of sucrose and therefore play a major role as a limiting factor in the export of photoassimilates out of the leaf. Plays a role for sucrose availability that is essential for plant growth and fiber elongation. In Vicia faba (Broad bean), this protein is Probable sucrose-phosphate synthase (SPS).